The sequence spans 427 residues: UPF0597 protein FN1147 (427 aa).

Belongs to the UPF0597 family.

This chain is UPF0597 protein FN1147, found in Fusobacterium nucleatum subsp. nucleatum (strain ATCC 25586 / DSM 15643 / BCRC 10681 / CIP 101130 / JCM 8532 / KCTC 2640 / LMG 13131 / VPI 4355).